A 495-amino-acid polypeptide reads, in one-letter code: Probable cytosol aminopeptidase (495 aa).

Lys-266 and Asp-271 together coordinate Mn(2+). Lys-278 is a catalytic residue. Positions 289, 348, and 350 each coordinate Mn(2+). The active site involves Arg-352.

The protein belongs to the peptidase M17 family. It depends on Mn(2+) as a cofactor.

It localises to the cytoplasm. It catalyses the reaction Release of an N-terminal amino acid, Xaa-|-Yaa-, in which Xaa is preferably Leu, but may be other amino acids including Pro although not Arg or Lys, and Yaa may be Pro. Amino acid amides and methyl esters are also readily hydrolyzed, but rates on arylamides are exceedingly low.. It carries out the reaction Release of an N-terminal amino acid, preferentially leucine, but not glutamic or aspartic acids.. Its function is as follows. Presumably involved in the processing and regular turnover of intracellular proteins. Catalyzes the removal of unsubstituted N-terminal amino acids from various peptides. This chain is Probable cytosol aminopeptidase, found in Pseudomonas aeruginosa (strain LESB58).